The following is a 415-amino-acid chain: Multifunctional CCA protein (415 aa).

Gly8 and Arg11 together coordinate ATP. Residues Gly8 and Arg11 each contribute to the CTP site. Mg(2+) is bound by residues Asp21 and Asp23. Arg91, Arg137, and Arg140 together coordinate ATP. 3 residues coordinate CTP: Arg91, Arg137, and Arg140. Residues 228–329 enclose the HD domain; that stretch reads TGIHTLMTLA…VGLFDSIDAW (102 aa).

Belongs to the tRNA nucleotidyltransferase/poly(A) polymerase family. Bacterial CCA-adding enzyme type 1 subfamily. In terms of assembly, monomer. Can also form homodimers and oligomers. It depends on Mg(2+) as a cofactor. Ni(2+) is required as a cofactor.

The enzyme catalyses a tRNA precursor + 2 CTP + ATP = a tRNA with a 3' CCA end + 3 diphosphate. It carries out the reaction a tRNA with a 3' CCA end + 2 CTP + ATP = a tRNA with a 3' CCACCA end + 3 diphosphate. Catalyzes the addition and repair of the essential 3'-terminal CCA sequence in tRNAs without using a nucleic acid template. Adds these three nucleotides in the order of C, C, and A to the tRNA nucleotide-73, using CTP and ATP as substrates and producing inorganic pyrophosphate. tRNA 3'-terminal CCA addition is required both for tRNA processing and repair. Also involved in tRNA surveillance by mediating tandem CCA addition to generate a CCACCA at the 3' terminus of unstable tRNAs. While stable tRNAs receive only 3'-terminal CCA, unstable tRNAs are marked with CCACCA and rapidly degraded. This is Multifunctional CCA protein from Cronobacter sakazakii (strain ATCC BAA-894) (Enterobacter sakazakii).